Consider the following 586-residue polypeptide: Dolichyl-diphosphooligosaccharide--protein glycosyltransferase subunit 1 (586 aa).

The N-terminal stretch at 1–15 is a signal peptide; sequence MRLLFAIALLGAVFA. Topologically, residues 16-421 are lumenal; it reads EDAWKAANVD…EFEFVDMLRE (406 aa). The chain crosses the membrane as a helical span at residues 422-442; sequence PLLASAFFFSLFFVIIVYSRF. The Cytoplasmic portion of the chain corresponds to 443 to 586; the sequence is DFTISSDPAK…NRADSVLASI (144 aa).

This sequence belongs to the OST1 family. In terms of assembly, component of the oligosaccharyltransferase (OST) complex.

The protein localises to the endoplasmic reticulum membrane. The protein resides in the cytoplasmic granule. The protein operates within protein modification; protein glycosylation. Functionally, subunit of the oligosaccharyl transferase (OST) complex that catalyzes the initial transfer of a defined glycan (Glc(3)Man(9)GlcNAc(2) in eukaryotes) from the lipid carrier dolichol-pyrophosphate to an asparagine residue within an Asn-X-Ser/Thr consensus motif in nascent polypeptide chains, the first step in protein N-glycosylation. N-glycosylation occurs cotranslationally and the complex associates with the Sec61 complex at the channel-forming translocon complex that mediates protein translocation across the endoplasmic reticulum (ER). All subunits are required for a maximal enzyme activity. This Caenorhabditis elegans protein is Dolichyl-diphosphooligosaccharide--protein glycosyltransferase subunit 1.